The following is a 351-amino-acid chain: Histidine-rich glycoprotein (351 aa).

A signal peptide spans 1-23; sequence MFTSLKKVATFSFLVWISQYSGS. The propeptide occupies 24 to 47; the sequence is NSCSSSLVKHIPQTGSNLTFDRVL. Asn-40 carries an N-linked (GlcNAc...) asparagine glycan. Residues 57-91 are compositionally biased toward basic and acidic residues; that stretch reads LHEEHHHHHPEEHHEPHHEEHHHHHPEEHHEPHHE. Residues 57–351 are disordered; that stretch reads LHEEHHHHHP…DAHHHHHHHH (295 aa). A run of 6 repeats spans residues 59–74, 75–90, 91–107, 108–123, 124–138, and 139–153. The 2 X 16 AA tandem repeats stretch occupies residues 59-90; that stretch reads EEHHHHHPEEHHEPHHEEHHHHHPEEHHEPHH. Residues 91 to 123 form a 2 X 17 AA tandem repeats region; that stretch reads EEHHHHHPHPHHHHHHHPPHHHHHLGHHHHHHH. The span at 92 to 351 shows a compositional bias: basic residues; the sequence is EHHHHHPHPH…DAHHHHHHHH (260 aa). The 2 X 15 AA tandem repeats stretch occupies residues 124–153; it reads AAHHHHHEEHHHHHHAAHHHHHEEHHHHHH. Residues 173-351 form an 18 X 10 AA tandem repeats region; the sequence is APHHHHHHHH…DAHHHHHHHH (179 aa).

The chain is Histidine-rich glycoprotein from Plasmodium lophurae.